Consider the following 1648-residue polypeptide: Putative 1-phosphatidylinositol-3-phosphate 5-kinase FAB1C (1648 aa).

The segment covering 97–106 (YDKVHPRDSP) has biased composition (basic and acidic residues). 4 disordered regions span residues 97 to 116 (YDKV…ATES), 241 to 276 (QEDH…NDDA), 721 to 746 (SEIP…ENQL), and 1083 to 1139 (KTGD…GTSL). A compositionally biased stretch (basic and acidic residues) spans 1084–1130 (TGDDNAPRNPEMHDPPKIDRRMQEGSDERDEQSHTDSEANGDNKDPE). The PIPK domain occupies 1316 to 1639 (NLNNRESEPS…RFRKAMTTYF (324 aa)).

Component of the PI(3,5)P2 regulatory complex at least composed of ATG18, SAC/FIG4, FAB1 and VAC14. Requires Mg(2+) as cofactor. It depends on Mn(2+) as a cofactor.

It catalyses the reaction a 1,2-diacyl-sn-glycero-3-phospho-(1D-myo-inositol-3-phosphate) + ATP = a 1,2-diacyl-sn-glycero-3-phospho-(1D-myo-inositol-3,5-bisphosphate) + ADP + H(+). Its function is as follows. The PI(3,5)P2 regulatory complex regulates both the synthesis and turnover of phosphatidylinositol 3,5-bisphosphate (PtdIns(3,5)P2). Catalyzes the phosphorylation of phosphatidylinositol 3-phosphate on the fifth hydroxyl of the myo-inositol ring, to form phosphatidylinositol 3,5-bisphosphate. This Arabidopsis thaliana (Mouse-ear cress) protein is Putative 1-phosphatidylinositol-3-phosphate 5-kinase FAB1C (FAB1C).